The chain runs to 96 residues: Large ribosomal subunit protein bL21 (96 aa).

The protein belongs to the bacterial ribosomal protein bL21 family. As to quaternary structure, part of the 50S ribosomal subunit. Contacts protein L20.

This protein binds to 23S rRNA in the presence of protein L20. This chain is Large ribosomal subunit protein bL21, found in Hydrogenobaculum sp. (strain Y04AAS1).